The chain runs to 493 residues: MRIEFVPVDTQAGATAALAVLAHEGAALSPEARAANEATGGALARAIAGGRFTGAKGQTLDIVAPNGLEAARVVLVGVDGSGAVEPEAVELAAASAFQAVKTSGVVELVLKLGADAETAARAAFGARLAAYRFDKYRTTEKAEKKPSVQVVKIAAADPVKAQKAYEPLAALADAIVFSRNLVSEPANILHPEEFAARAKGLESLGLEVEILGEAEMAKLGMGSLLGVGQGSVRESQLVIMKWMGAADKSAQPIAFVGKGVCFDTGGISIKPADGMEDMKWDMGGAAAVAGVMHALAGRKAKVNAIGVLGLVENMPDGNAQRPGDVVTSMSGQTIEVINTDAEGRLVLADALWYTQERFKPQFMIDLATLTGAIIISLGHDYAGLFSNNDGLSEKLLAAGKAERESLWRLPLPAAYEKQIESPIADMKNIGGRPAGSITAGLFLQKFVNGVPWAHLDIASVAWKKPSADPTVPDGAVGYGVRLLNRLVADAYEG.

Mn(2+)-binding residues include Lys258 and Asp263. Residue Lys270 is part of the active site. Residues Asp281, Asp340, and Glu342 each coordinate Mn(2+). The active site involves Arg344.

This sequence belongs to the peptidase M17 family. Requires Mn(2+) as cofactor.

It localises to the cytoplasm. It catalyses the reaction Release of an N-terminal amino acid, Xaa-|-Yaa-, in which Xaa is preferably Leu, but may be other amino acids including Pro although not Arg or Lys, and Yaa may be Pro. Amino acid amides and methyl esters are also readily hydrolyzed, but rates on arylamides are exceedingly low.. It carries out the reaction Release of an N-terminal amino acid, preferentially leucine, but not glutamic or aspartic acids.. Its function is as follows. Presumably involved in the processing and regular turnover of intracellular proteins. Catalyzes the removal of unsubstituted N-terminal amino acids from various peptides. The protein is Probable cytosol aminopeptidase of Caulobacter vibrioides (strain ATCC 19089 / CIP 103742 / CB 15) (Caulobacter crescentus).